The primary structure comprises 259 residues: Snake venom serine protease homolog rhinocerase 2 (259 aa).

An N-terminal signal peptide occupies residues 1–17 (VLIRVLANLLLLQLSYA). The propeptide occupies 18–23 (QESSEL). The Peptidase S1 domain occupies 24–250 (VIGGDECDIN…YTDWIEGIIA (227 aa)). 6 disulfide bridges follow: Cys-30/Cys-164, Cys-51/Cys-67, Cys-99/Cys-257, Cys-143/Cys-211, Cys-175/Cys-190, and Cys-201/Cys-226. Asn-252 carries N-linked (GlcNAc...) asparagine glycosylation.

Belongs to the peptidase S1 family. Snake venom subfamily. Expressed by the venom gland.

It is found in the secreted. Snake venom serine protease homolog that may act in the hemostasis system of the prey. The sequence is that of Snake venom serine protease homolog rhinocerase 2 from Bitis rhinoceros (West African gaboon viper).